The sequence spans 392 residues: ATP phosphoribosyltransferase regulatory subunit (392 aa).

This sequence belongs to the class-II aminoacyl-tRNA synthetase family. HisZ subfamily. As to quaternary structure, heteromultimer composed of HisG and HisZ subunits.

The protein localises to the cytoplasm. The protein operates within amino-acid biosynthesis; L-histidine biosynthesis; L-histidine from 5-phospho-alpha-D-ribose 1-diphosphate: step 1/9. Its function is as follows. Required for the first step of histidine biosynthesis. May allow the feedback regulation of ATP phosphoribosyltransferase activity by histidine. This chain is ATP phosphoribosyltransferase regulatory subunit, found in Marinomonas sp. (strain MWYL1).